The chain runs to 344 residues: NDP-polyphosphate phosphotransferase 2 (344 aa).

The disordered stretch occupies residues 1 to 60 (METAKPIAPQKDSKANGVDATDPVVKVASPQDPAGDAKVEDATAPVAEVEPRTPRNRRLP).

This sequence belongs to the polyphosphate kinase 2 (PPK2) family. Class I subfamily. Requires Mg(2+) as cofactor.

The catalysed reaction is [phosphate](n) + ATP = [phosphate](n+1) + ADP. The enzyme catalyses [phosphate](n) + CTP = [phosphate](n+1) + CDP. It carries out the reaction [phosphate](n) + GTP = [phosphate](n+1) + GDP. It catalyses the reaction [phosphate](n) + UTP = [phosphate](n+1) + UDP. Its function is as follows. Uses inorganic polyphosphate (polyP) as a donor to convert NDP to NTP. PolyP hydrolysis is slightly faster with ADP, but it can also use GDP, CDP and UDP. In Ruegeria pomeroyi (strain ATCC 700808 / DSM 15171 / DSS-3) (Silicibacter pomeroyi), this protein is NDP-polyphosphate phosphotransferase 2.